We begin with the raw amino-acid sequence, 459 residues long: Putrescine aminotransferase (459 aa).

Pyridoxal 5'-phosphate is bound by residues glycine 150 to threonine 151 and glutamine 274. Residue lysine 300 is modified to N6-(pyridoxal phosphate)lysine. Threonine 332 is a binding site for pyridoxal 5'-phosphate.

It belongs to the class-III pyridoxal-phosphate-dependent aminotransferase family. Putrescine aminotransferase subfamily. Requires pyridoxal 5'-phosphate as cofactor.

It carries out the reaction an alkane-alpha,omega-diamine + 2-oxoglutarate = an omega-aminoaldehyde + L-glutamate. It catalyses the reaction putrescine + 2-oxoglutarate = 1-pyrroline + L-glutamate + H2O. The catalysed reaction is cadaverine + 2-oxoglutarate = 5-aminopentanal + L-glutamate. It participates in amine and polyamine degradation; putrescine degradation; 4-aminobutanal from putrescine (transaminase route): step 1/1. Its function is as follows. Catalyzes the aminotransferase reaction from putrescine to 2-oxoglutarate, leading to glutamate and 4-aminobutanal, which spontaneously cyclizes to form 1-pyrroline. This is the first step in one of two pathways for putrescine degradation, where putrescine is converted into 4-aminobutanoate (gamma-aminobutyrate or GABA) via 4-aminobutanal. Also functions as a cadaverine transaminase in a a L-lysine degradation pathway to succinate that proceeds via cadaverine, glutarate and L-2-hydroxyglutarate. This is Putrescine aminotransferase from Escherichia coli O9:H4 (strain HS).